The sequence spans 368 residues: Agmatine deiminase (368 aa).

The active-site Amidino-cysteine intermediate is C357.

Belongs to the agmatine deiminase family. As to quaternary structure, homodimer.

It carries out the reaction agmatine + H2O = N-carbamoylputrescine + NH4(+). It functions in the pathway amine and polyamine biosynthesis; putrescine biosynthesis via agmatine pathway; N-carbamoylputrescine from agmatine: step 1/1. In terms of biological role, mediates the hydrolysis of agmatine into N-carbamoylputrescine in the arginine decarboxylase (ADC) pathway of putrescine biosynthesis, a basic polyamine. The polypeptide is Agmatine deiminase (Pseudomonas fluorescens (strain ATCC BAA-477 / NRRL B-23932 / Pf-5)).